Reading from the N-terminus, the 883-residue chain is MTSVSGGSPLLRPQLYRTVTVSTILQADQQDRFLESGELSQLATYLTSGNKRLDIIITLTNNSEAIVSRAANRIFVGGSPISYLERPQSGIDAKLGTNSYVESQSGFLEGFRSLFNTGGADITPAGFKPINVSRYGITRMQKSLRDLDWFLRYITYAIVAGDPNILVTNIRGLREIIENACSSAVTLVALQEMRRASLSYFTKDASAEAIVKQYFDVVITEFLAPAPSDLVRKRTSTSLQGLKLPQIYANAVVQKPRFQMKSTLSTTEKETVIKAVYRQIFERDVRRAYSLKNYDLESKVKNGQLSIKEFVRALGKSKLYAQQFYEPFINSRALELAFRHFLGRGPGSREEVQEYFALISKGGLPLLVDALVDSKEYEEYFGEEIVPYLRTLGEEAQECRNWGAQIKLLNYSARFQKTPQFITLFAGYKNPLPDQHPYGQGNDPLEIQFGAIFPKETLQTKAAFFGKDTRRILIRRGNGIDNQLSNPSARQKSPGSFGPKVFKLSSVASLNKNTKNVSFGETSTQAIIKAVYLQIIGRETYESQRLKVWEIKLENGEISIREFVKQVAKSNLFRSLYWTPYYVCKSIEYINRRILGRPTYGRSEINKLFDIAAKKGFYALIDTLMDSPEYDESFGENTVPYERYLTPGGLALRIKRPNLSVSKEAKNELRFIELGAINESRGERSIQLRIQQGVSKRREQTKIFKLNHHDDKVNLEKVIKAVYRQVFERDMDMYRIQNEFTVFESRLKNKEISVKEFVEALGQSQLYQKEFYTPYPNTKVIELAMKHFLGRAPKNQIEIRKYNQLLASNGIAALIRSLVSSLEYAEVFGEDTVPYRRFPTFPATNFPNTEKLYNSLTKQTKTISNPSFAPEKTRRIDLLSPGA.

Position 181 (Cys181) interacts with (2R,3E)-phycocyanobilin. PBS-linker domains lie at Ser238–Thr418, Ser488–Leu669, and Arg684–Lys861.

Belongs to the phycobilisome linker protein family. Post-translationally, contains one covalently linked bilin chromophore. This protein autochromophorylates (Potential).

The protein localises to the plastid. It is found in the cyanelle thylakoid membrane. In terms of biological role, this protein is postulated to act both as terminal energy acceptor and as a linker polypeptide that stabilizes the phycobilisome architecture. May have intrinsic bilin lyase activity. The polypeptide is Phycobiliprotein ApcE (apcE) (Cyanophora paradoxa).